A 709-amino-acid chain; its full sequence is Acyl-coenzyme A oxidase 4 (709 aa).

The span at 1–12 (MTFTKKNVSVSQ) shows a compositional bias: polar residues. Positions 1–29 (MTFTKKNVSVSQGPDPRSSIQKERDSSKW) are disordered.

Belongs to the acyl-CoA oxidase family. As to quaternary structure, homooctamer. Requires FAD as cofactor.

The protein resides in the peroxisome. It carries out the reaction a 2,3-saturated acyl-CoA + O2 = a (2E)-enoyl-CoA + H2O2. It participates in lipid metabolism; peroxisomal fatty acid beta-oxidation. The sequence is that of Acyl-coenzyme A oxidase 4 (POX4) from Candida tropicalis (Yeast).